The sequence spans 801 residues: Sucrose synthase isoform 2 (801 aa).

The segment at M271–T748 is GT-B glycosyltransferase.

The protein belongs to the glycosyltransferase 1 family. Plant sucrose synthase subfamily. Homotetramer. In terms of tissue distribution, exclusively expressed in flowers.

It catalyses the reaction an NDP-alpha-D-glucose + D-fructose = a ribonucleoside 5'-diphosphate + sucrose + H(+). Sucrose-cleaving enzyme that provides UDP-glucose and fructose for various metabolic pathways. This chain is Sucrose synthase isoform 2, found in Daucus carota (Wild carrot).